The chain runs to 332 residues: MATGGYRSSGSTTDFLEEWKAKREKMRAKQNPVGPGSSGGDPAAKSPAGPLAQTTAAGTSELNHGPAGAAAPAAPGPGALNCAHGSSALPRGAPGSRRPEDECPIAAGAAGAPASRGDEEEPDSAPEKGRSSGPSARKGKGQIEKRKLREKRRSTGVVNIPAAECLDEYEDDEAGQKERKREDAITQQNTIQNEAASLPDPGTSYLPQDPSRTVPGRYKSTISAPEEEILNRYPRTDRSGFSRHNRDTSAPANFASSSTLEKRIEDLEKEVLRERQENLRLTRLMQDKEEMIGKLKEEIDLLNRDLDDMEDENEQLKQENKTLLKVVGQLTR.

2 stretches are compositionally biased toward polar residues: residues 1 to 14 (MATG…STTD) and 52 to 62 (AQTTAAGTSEL). A disordered region spans residues 1-253 (MATGGYRSSG…HNRDTSAPAN (253 aa)). The short motif at 61–65 (ELNHG) is the B30.2/SPRY domain-binding motif element. A compositionally biased stretch (low complexity) spans 65–79 (GPAGAAAPAAPGPGA). Positions 137–153 (RKGKGQIEKRKLREKRR) match the Nuclear localization signal motif. The segment at 137 to 195 (RKGKGQIEKRKLREKRRSTGVVNIPAAECLDEYEDDEAGQKERKREDAITQQNTIQNEA) is selective for apoptosis induction in cancer cells (SAC). At T155 the chain carries Phosphothreonine; by PKA. A compositionally biased stretch (basic and acidic residues) spans 174–184 (AGQKERKREDA). The stretch at 176–198 (QKERKREDAITQQNTIQNEAASL) forms a coiled coil. The segment covering 185–195 (ITQQNTIQNEA) has biased composition (polar residues). The residue at position 223 (S223) is a Phosphoserine. Over residues 234 to 247 (PRTDRSGFSRHNRD) the composition is skewed to basic and acidic residues. Residues 292–332 (IGKLKEEIDLLNRDLDDMEDENEQLKQENKTLLKVVGQLTR) are leucine-zipper.

Homooligomer. Interacts (via the C-terminal region) with WT1. Interacts with THAP1. Interacts with AATF. Interacts with BACE1. Interacts with SPSB1 (via B30.2/SPRY domain); this interaction is direct and occurs in association with the Elongin BC complex. Interacts with SPSB2 (via B30.2/SPRY domain); this interaction occurs in association with the Elongin BC complex. Interacts with SPSB4 (via B30.2/SPRY domain); this interaction occurs in association with the Elongin BC complex. Component of a ternary complex composed of SQSTM1 and PRKCZ. Interacts with actin. Preferentially phosphorylated at the Thr-155 by PKC in cancer cells.

The protein localises to the cytoplasm. Its subcellular location is the nucleus. Its function is as follows. Pro-apoptotic protein capable of selectively inducing apoptosis in cancer cells, sensitizing the cells to diverse apoptotic stimuli and causing regression of tumors in animal models. Induces apoptosis in certain cancer cells by activation of the Fas prodeath pathway and coparallel inhibition of NF-kappa-B transcriptional activity. Inhibits the transcriptional activation and augments the transcriptional repression mediated by WT1. Down-regulates the anti-apoptotic protein BCL2 via its interaction with WT1. Also seems to be a transcriptional repressor by itself. May be directly involved in regulating the amyloid precursor protein (APP) cleavage activity of BACE1. In Rattus norvegicus (Rat), this protein is PRKC apoptosis WT1 regulator protein (Pawr).